Here is a 644-residue protein sequence, read N- to C-terminus: DNA mismatch repair protein MutL (644 aa).

2 disordered regions span residues Ser353 to Thr399 and Gly420 to Ala440. Positions Ser370–Glu381 are enriched in polar residues. Positions Ser383–Thr399 are enriched in basic and acidic residues.

The protein belongs to the DNA mismatch repair MutL/HexB family.

This protein is involved in the repair of mismatches in DNA. It is required for dam-dependent methyl-directed DNA mismatch repair. May act as a 'molecular matchmaker', a protein that promotes the formation of a stable complex between two or more DNA-binding proteins in an ATP-dependent manner without itself being part of a final effector complex. This Shewanella sp. (strain MR-4) protein is DNA mismatch repair protein MutL.